The sequence spans 1039 residues: Multidrug resistance protein MdtB (1039 aa).

The next 11 membrane-spanning stretches (helical) occupy residues 15-37, 345-362, 367-389, 396-418, 438-460, 472-494, 535-557, 866-888, 908-930, 967-989, and 999-1021; these read LFIM…GIIG, FELM…YLFL, ATII…MVFL, LTLM…VIEN, GEIG…PLLF, FAIT…TPMM, HPWL…WVFI, VWLI…ESFI, LMIA…IGIV, ILMT…GVGA, and MVGG…YLLF.

This sequence belongs to the resistance-nodulation-cell division (RND) (TC 2.A.6) family. MdtB subfamily. As to quaternary structure, part of a tripartite efflux system composed of MdtA, MdtB and MdtC. MdtB forms a heteromultimer with MdtC.

The protein localises to the cell inner membrane. The chain is Multidrug resistance protein MdtB from Shigella flexneri.